The sequence spans 389 residues: S-adenosylmethionine synthase (389 aa).

His-16 is an ATP binding site. Mg(2+) is bound at residue Asp-18. Glu-44 contacts K(+). Residues Glu-57 and Gln-101 each coordinate L-methionine. Residues 101–111 form a flexible loop region; it reads QSVDIAQGVNE. ATP contacts are provided by residues 168 to 170, 234 to 235, Asp-243, 249 to 250, Ala-266, and Lys-270; these read DAK, RF, and RK. Asp-243 is a binding site for L-methionine. Residue Lys-274 participates in L-methionine binding.

It belongs to the AdoMet synthase family. Homotetramer; dimer of dimers. Mg(2+) is required as a cofactor. It depends on K(+) as a cofactor.

It localises to the cytoplasm. It catalyses the reaction L-methionine + ATP + H2O = S-adenosyl-L-methionine + phosphate + diphosphate. It participates in amino-acid biosynthesis; S-adenosyl-L-methionine biosynthesis; S-adenosyl-L-methionine from L-methionine: step 1/1. Functionally, catalyzes the formation of S-adenosylmethionine (AdoMet) from methionine and ATP. The overall synthetic reaction is composed of two sequential steps, AdoMet formation and the subsequent tripolyphosphate hydrolysis which occurs prior to release of AdoMet from the enzyme. This chain is S-adenosylmethionine synthase, found in Magnetococcus marinus (strain ATCC BAA-1437 / JCM 17883 / MC-1).